Here is a 180-residue protein sequence, read N- to C-terminus: UPF0149 protein XOO1028 (180 aa).

This sequence belongs to the UPF0149 family.

The chain is UPF0149 protein XOO1028 from Xanthomonas oryzae pv. oryzae (strain MAFF 311018).